The primary structure comprises 428 residues: Tyrosine--tRNA ligase (428 aa).

Position 34 (tyrosine 34) interacts with L-tyrosine. The 'HIGH' region signature appears at 39–48 (PTADSLHIGH). Residues tyrosine 171 and glutamine 175 each coordinate L-tyrosine. Positions 236–240 (KFGKT) match the 'KMSKS' region motif. ATP is bound at residue lysine 239. Residues 358–424 (VGLIDLLVDA…GKKKYFLIQV (67 aa)) form the S4 RNA-binding domain.

The protein belongs to the class-I aminoacyl-tRNA synthetase family. TyrS type 1 subfamily. As to quaternary structure, homodimer.

It localises to the cytoplasm. The catalysed reaction is tRNA(Tyr) + L-tyrosine + ATP = L-tyrosyl-tRNA(Tyr) + AMP + diphosphate + H(+). Functionally, catalyzes the attachment of tyrosine to tRNA(Tyr) in a two-step reaction: tyrosine is first activated by ATP to form Tyr-AMP and then transferred to the acceptor end of tRNA(Tyr). The polypeptide is Tyrosine--tRNA ligase (Oceanobacillus iheyensis (strain DSM 14371 / CIP 107618 / JCM 11309 / KCTC 3954 / HTE831)).